The chain runs to 71 residues: Exodeoxyribonuclease 7 small subunit (71 aa).

It belongs to the XseB family. As to quaternary structure, heterooligomer composed of large and small subunits.

The protein localises to the cytoplasm. The catalysed reaction is Exonucleolytic cleavage in either 5'- to 3'- or 3'- to 5'-direction to yield nucleoside 5'-phosphates.. Its function is as follows. Bidirectionally degrades single-stranded DNA into large acid-insoluble oligonucleotides, which are then degraded further into small acid-soluble oligonucleotides. This Clostridium botulinum (strain ATCC 19397 / Type A) protein is Exodeoxyribonuclease 7 small subunit.